The sequence spans 305 residues: Homoserine O-acetyltransferase (305 aa).

Cys142 (acyl-thioester intermediate) is an active-site residue. 2 residues coordinate substrate: Lys163 and Ser192. The active-site Proton acceptor is the His235. Residue Glu237 is part of the active site. Position 249 (Arg249) interacts with substrate.

The protein belongs to the MetA family.

The protein resides in the cytoplasm. The catalysed reaction is L-homoserine + acetyl-CoA = O-acetyl-L-homoserine + CoA. It functions in the pathway amino-acid biosynthesis; L-methionine biosynthesis via de novo pathway; O-acetyl-L-homoserine from L-homoserine: step 1/1. Functionally, transfers an acetyl group from acetyl-CoA to L-homoserine, forming acetyl-L-homoserine. The chain is Homoserine O-acetyltransferase from Hyphomonas neptunium (strain ATCC 15444).